The chain runs to 697 residues: Elongation factor G (697 aa).

In terms of domain architecture, tr-type G spans 6–281 (ENIRNIGICA…AVVDYLPSPI (276 aa)). GTP contacts are provided by residues 15-22 (AHIDAGKT), 79-83 (DTPGH), and 133-136 (NKMD).

This sequence belongs to the TRAFAC class translation factor GTPase superfamily. Classic translation factor GTPase family. EF-G/EF-2 subfamily.

The protein localises to the cytoplasm. Its function is as follows. Catalyzes the GTP-dependent ribosomal translocation step during translation elongation. During this step, the ribosome changes from the pre-translocational (PRE) to the post-translocational (POST) state as the newly formed A-site-bound peptidyl-tRNA and P-site-bound deacylated tRNA move to the P and E sites, respectively. Catalyzes the coordinated movement of the two tRNA molecules, the mRNA and conformational changes in the ribosome. This Rickettsia bellii (strain OSU 85-389) protein is Elongation factor G.